We begin with the raw amino-acid sequence, 372 residues long: Cytoplasmic envelopment protein 2 (372 aa).

The interval 1-38 is disordered; sequence MAQRALWRPQATPGPPGAAAPPGHRGAPPDARAPDPGP. Positions 20–30 are enriched in low complexity; the sequence is APPGHRGAPPD.

Belongs to the herpesviridae cytoplasmic envelopment protein 2 family. In terms of assembly, interacts with cytoplasmic envelopment protein 3 and with the capsid.

Its subcellular location is the virion tegument. It localises to the host cytoplasm. The protein localises to the host nucleus. Its function is as follows. Plays a critical role in cytoplasmic virus egress. Participates in the final step of tegumentation and envelope acquisition within the host cytoplasm by directly interacting with the capsid. Upon virion binding to target cell, a signaling cascade is triggered to disrupt the interaction with the capsid, thereby preparing capsid uncoating. The protein is Cytoplasmic envelopment protein 2 (UL16) of Human herpesvirus 2 (strain HG52) (HHV-2).